The chain runs to 975 residues: Chromosome transmission fidelity protein 18 homolog (975 aa).

Disordered regions lie at residues 30-83 (EGAS…KRQV) and 114-141 (SEEMEEPPPPDSSPTDITPPPSPEDLAE). Thr-51 is subject to Phosphothreonine. Residues 58-77 (RGDAASSPAPAASVGSSQGG) are compositionally biased toward low complexity. A Phosphoserine modification is found at Ser-64. A compositionally biased stretch (pro residues) spans 122–136 (PPDSSPTDITPPPSP). A Phosphoserine modification is found at Ser-225. Disordered regions lie at residues 246–276 (SDTLHSLRSGEEEAAQPLGAPEEEPTDGQDA) and 320–346 (RPSRKPRPSVEPARVSKEATAPGKWKS). 374-381 (GPPGLGKT) contacts ATP. The disordered stretch occupies residues 858–896 (ASARVENSPQVDGSPPGLEGLLGGIGEKGVHRPAPRNHE). Ser-871 is modified (phosphoserine).

Belongs to the activator 1 small subunits family. CTF18 subfamily. In terms of assembly, component of the CTF18-RFC complex, which consists of CTF18, CTF8, DCC1, RFC2, RFC3, RFC4 and RFC5. During assembly of the CTF18-RFC complex, CTF18 may first assemble into a subcomplex with RFC2, RFC3, RFC4 and RFC5. CTF18 then interacts directly with CTF8, which in turn interacts with DCC1. The CTF18-RFC complex associates with PCNA and with DNA polymerase POLH. The CTF18-RFC complex does not interact with the Rad9/Rad1/Hus1 complex. CTF18 interacts with SMC1A and RAD21. Interacts with DDX11.

The protein localises to the nucleus. Functionally, chromosome cohesion factor involved in sister chromatid cohesion and fidelity of chromosome transmission. Component of one of the cell nuclear antigen loader complexes, CTF18-replication factor C (CTF18-RFC), which consists of CTF18, CTF8, DCC1, RFC2, RFC3, RFC4 and RFC5. The CTF18-RFC complex binds to single-stranded and primed DNAs and has weak ATPase activity that is stimulated by the presence of primed DNA, replication protein A (RPA) and by proliferating cell nuclear antigen (PCNA). The CTF18-RFC complex catalyzes the ATP-dependent loading of PCNA onto primed and gapped DNA. Interacts with and stimulates DNA polymerase POLH. During DNA repair synthesis, involved in loading DNA polymerase POLE at the sites of local damage. The protein is Chromosome transmission fidelity protein 18 homolog (CHTF18) of Homo sapiens (Human).